Reading from the N-terminus, the 413-residue chain is Sensor protein SphS (413 aa).

Residues 176–398 (DVAHELKTPL…WLRVQLPQEP (223 aa)) enclose the Histidine kinase domain. The residue at position 179 (His179) is a Phosphohistidine; by autocatalysis.

Its subcellular location is the cytoplasm. It carries out the reaction ATP + protein L-histidine = ADP + protein N-phospho-L-histidine.. In terms of biological role, member of the two-component regulatory system SphR/SphS. Sensory kinase. Is involved in inducible production of alkaline phosphatase in response to phosphate limitation as it is directly involved in the regulation of phoA transcription in response to phosphate limitation. SphS functions as a protein kinase that phosphorylates SphR. The sequence is that of Sensor protein SphS (sphS) from Synechococcus elongatus (strain ATCC 33912 / PCC 7942 / FACHB-805) (Anacystis nidulans R2).